Consider the following 73-residue polypeptide: Salivary protein FS48 (73 aa).

The N-terminal stretch at 1–21 (MKFAFAIFVVLAILHTELISA) is a signal peptide.

It localises to the secreted. Its function is as follows. Salivary protein that inhibits host voltage-gated potassium channels Kv1.1/KCNA1, Kv1.2/KCNA2 and Kv1.3/KCNA3 likely via a voltage-independent pore-blocking mechanism. Suppresses expression of the Kv1.3/KCNA3 channel in lipopolysaccharide (LPS)-stimulated mouse macrophages and human T-cells. Down-regulates secretion of nitric oxide (NO) and inflammatory cytokines, such as TNF-alpha/TNF, IL-1beta/IL1B and IL6, in LPS-stimulated mouse macrophages in a manner dependent on Kv1.3/KCNA3 channel blockage. Reduces activation of MAPK and NF-kappa-B signaling pathways in LPS-stimulated mouse macrophages. Modulates intracellular Ca(2+) signaling in human PMA/ionomycin-triggered T-cells. Interferes with the activation of the MAPK, NF-kappa-B and NFATc1 pathways in human PMA/ionomycin-triggered T-cells. Reduces proliferation of human PMA/ionomycin-triggered T-cells. Down-regulates secretion of cytokines, such as TNF-alpha/TNF and IL2, in human PMA/ionomycin-triggered T-cells. The sequence is that of Salivary protein FS48 from Xenopsylla cheopis (Oriental rat flea).